Reading from the N-terminus, the 661-residue chain is MGTHGATKSATSAVPTPRSNSMAMVRLAIGLLGVCAVVAAFGLVSGARRYAEAGNPYPGAFVSVAEPVGFFAASLAGALCLGALIHVVMTAKPEPDGLIDAAAFRIHLLAERVSGLWLGLAATMVVIQAAHDTGVGPARLLASGALSDSVAASEMARGWIVAAICALVVATALRLYTRWLGHVVLLVPTVLAVVATAVTGNPGQGPDHDYATSAAIVFAVAFATLTGLKIAAALAGTTPSRAVLVTQVTCGALALAYGAMLLYLFIPGWAVDSDFARLGLLAGVILTSVWLFDCWRLLVRPPHAGRRRGGGSGAALAMMAAMASIAAMAVMTAPRFLTHAFTAWDVFLGYELPQPPTIARVLTVWRFDSLIGAAGVVLAIGYAAGFAALRRRGNSWPVGRLIAWLTGCAALVFTSGSGVRAYGSAMFSVHMAEHMTLNMFIPVLLVLGGPVTLALRVLPVTGDGRPPGAREWLTWLLHSRVTTFLSHPITAFVLFVASPYIVYFTPLFDTFVRYHWGHEFMAIHFLVVGYLFYWAIIGIDPGPRRLPYPGRIGLLFAVMPFHAFFGIALMTMSSTVGATFYRSVNLPWLSSIIADQHLGGGIAWSLTELPVIMVIVALVTQWARQDRRVASREDRHADSDYADDELEAYNAMLRELSRMRR.

A run of 16 helical transmembrane segments spans residues 27 to 47 (LAIG…VSGA), 68 to 88 (VGFF…IHVV), 116 to 136 (LWLG…TGVG), 150 to 170 (VAAS…LVVA), 179 to 199 (WLGH…TAVT), 214 to 234 (AAIV…AAAL), 251 to 271 (GALA…GWAV), 279 to 299 (GLLA…RLLV), 313 to 333 (GAAL…VMTA), 369 to 389 (SLIG…FAAL), 396 to 416 (WPVG…FTSG), 435 to 455 (MTLN…TLAL), 488 to 508 (PITA…TPLF), 519 to 539 (EFMA…IIGI), 552 to 572 (IGLL…LMTM), and 599 to 619 (GGGI…VALV).

It to M.leprae ML1998.

It is found in the cell membrane. This is an uncharacterized protein from Mycobacterium tuberculosis (strain CDC 1551 / Oshkosh).